We begin with the raw amino-acid sequence, 750 residues long: Photosystem I P700 chlorophyll a apoprotein A1 (750 aa).

Transmembrane regions (helical) follow at residues 70–93, 156–179, 195–219, 291–309, 346–369, 385–411, 433–455, and 531–549; these read VFSA…FHGA, LYCT…FHYH, LNHH…HVSL, IAHH…GHMY, WHAQ…HHMY, LSLF…IFMV, AIIS…LYIH, and FLVH…LILL. Positions 573 and 582 each coordinate [4Fe-4S] cluster. The next 2 helical transmembrane spans lie at 589-610 and 664-686; these read HVFL…HFSW and LSAY…MFLF. Histidine 675 serves as a coordination point for chlorophyll a'. Residues methionine 683 and tyrosine 691 each coordinate chlorophyll a. Phylloquinone is bound at residue tryptophan 692. The helical transmembrane segment at 724 to 744 threads the bilayer; that stretch reads AVGVTHYLLGGIATTWAFFLA.

The protein belongs to the PsaA/PsaB family. As to quaternary structure, the PsaA/B heterodimer binds the P700 chlorophyll special pair and subsequent electron acceptors. PSI consists of a core antenna complex that captures photons, and an electron transfer chain that converts photonic excitation into a charge separation. The eukaryotic PSI reaction center is composed of at least 11 subunits. It depends on P700 is a chlorophyll a/chlorophyll a' dimer, A0 is one or more chlorophyll a, A1 is one or both phylloquinones and FX is a shared 4Fe-4S iron-sulfur center. as a cofactor.

It localises to the plastid. Its subcellular location is the chloroplast thylakoid membrane. The catalysed reaction is reduced [plastocyanin] + hnu + oxidized [2Fe-2S]-[ferredoxin] = oxidized [plastocyanin] + reduced [2Fe-2S]-[ferredoxin]. In terms of biological role, psaA and PsaB bind P700, the primary electron donor of photosystem I (PSI), as well as the electron acceptors A0, A1 and FX. PSI is a plastocyanin-ferredoxin oxidoreductase, converting photonic excitation into a charge separation, which transfers an electron from the donor P700 chlorophyll pair to the spectroscopically characterized acceptors A0, A1, FX, FA and FB in turn. Oxidized P700 is reduced on the lumenal side of the thylakoid membrane by plastocyanin. The sequence is that of Photosystem I P700 chlorophyll a apoprotein A1 from Arabis hirsuta (Hairy rock-cress).